A 178-amino-acid chain; its full sequence is Probable DNA-directed RNA polymerase subunit delta (178 aa).

Residues leucine 14 to tryptophan 81 form the HTH HARE-type domain. 2 disordered regions span residues aspartate 88–aspartate 122 and leucine 141–lysine 178. 3 stretches are compositionally biased toward acidic residues: residues aspartate 105 to aspartate 122, leucine 141 to histidine 150, and threonine 161 to lysine 178.

This sequence belongs to the RpoE family. In terms of assembly, RNAP is composed of a core of 2 alpha, a beta and a beta' subunits. The core is associated with a delta subunit and one of several sigma factors.

Participates in both the initiation and recycling phases of transcription. In the presence of the delta subunit, RNAP displays an increased specificity of transcription, a decreased affinity for nucleic acids, and an increased efficiency of RNA synthesis because of enhanced recycling. This chain is Probable DNA-directed RNA polymerase subunit delta, found in Listeria monocytogenes serovar 1/2a (strain ATCC BAA-679 / EGD-e).